A 362-amino-acid polypeptide reads, in one-letter code: Cytochrome c peroxidase, mitochondrial (362 aa).

A mitochondrion-targeting transit peptide spans 1–40; that stretch reads MASASRQILRAASRASTRTAFAPAASRGLAARTIAGRRFY. Residue H121 is the Proton acceptor of the active site. H244 provides a ligand contact to heme b. Residue W260 is the Tryptophan radical intermediate of the active site.

The protein belongs to the peroxidase family. Cytochrome c peroxidase subfamily. Forms a one-to-one complex with cytochrome c. It depends on heme b as a cofactor.

It localises to the mitochondrion matrix. Its subcellular location is the mitochondrion intermembrane space. It carries out the reaction 2 Fe(II)-[cytochrome c] + H2O2 + 2 H(+) = 2 Fe(III)-[cytochrome c] + 2 H2O. Destroys radicals which are normally produced within the cells and which are toxic to biological systems. The chain is Cytochrome c peroxidase, mitochondrial (CCP1) from Pyricularia oryzae (strain 70-15 / ATCC MYA-4617 / FGSC 8958) (Rice blast fungus).